Reading from the N-terminus, the 255-residue chain is NAD(P)H-quinone oxidoreductase subunit K, chloroplastic (255 aa).

Residues cysteine 47, cysteine 48, cysteine 112, and cysteine 143 each coordinate [4Fe-4S] cluster.

The protein belongs to the complex I 20 kDa subunit family. NDH is composed of at least 16 different subunits, 5 of which are encoded in the nucleus. It depends on [4Fe-4S] cluster as a cofactor.

The protein localises to the plastid. Its subcellular location is the chloroplast thylakoid membrane. The catalysed reaction is a plastoquinone + NADH + (n+1) H(+)(in) = a plastoquinol + NAD(+) + n H(+)(out). It catalyses the reaction a plastoquinone + NADPH + (n+1) H(+)(in) = a plastoquinol + NADP(+) + n H(+)(out). Its function is as follows. NDH shuttles electrons from NAD(P)H:plastoquinone, via FMN and iron-sulfur (Fe-S) centers, to quinones in the photosynthetic chain and possibly in a chloroplast respiratory chain. The immediate electron acceptor for the enzyme in this species is believed to be plastoquinone. Couples the redox reaction to proton translocation, and thus conserves the redox energy in a proton gradient. The polypeptide is NAD(P)H-quinone oxidoreductase subunit K, chloroplastic (Zygnema circumcarinatum (Green alga)).